The following is a 207-amino-acid chain: Ribosome maturation factor RimP (207 aa).

The segment at R171–H207 is disordered. Residues K197–H207 are compositionally biased toward basic residues.

It belongs to the RimP family.

It is found in the cytoplasm. Functionally, required for maturation of 30S ribosomal subunits. The protein is Ribosome maturation factor RimP of Gluconacetobacter diazotrophicus (strain ATCC 49037 / DSM 5601 / CCUG 37298 / CIP 103539 / LMG 7603 / PAl5).